A 227-amino-acid polypeptide reads, in one-letter code: PKHD-type hydroxylase Veis_3084 (227 aa).

Positions 27–51 (DDGKDSAGTQARQAKNNQQLPRDSE) are disordered. A compositionally biased stretch (polar residues) spans 33–47 (AGTQARQAKNNQQLP). Residues 78-179 (RVFPPRVNRY…RMACFFWVES (102 aa)) enclose the Fe2OG dioxygenase domain. Fe cation is bound by residues histidine 97, aspartate 99, and histidine 160. Residue arginine 170 participates in 2-oxoglutarate binding.

The cofactor is Fe(2+). It depends on L-ascorbate as a cofactor.

In Verminephrobacter eiseniae (strain EF01-2), this protein is PKHD-type hydroxylase Veis_3084.